A 734-amino-acid chain; its full sequence is MASRFPKFSQGLSQDPTTRRIWFGIATAHDFESHDDMTEERLYQKIFASHFGQLAIIFLWTSGNLFHVAWQGNFEAWGQDPLHVRPIAHAIWDPHFGQPAVEAFTRGGASGPVNIAYSGVYQWWYTIGLRTNQDLYNGALFLVILSSISLIAGWLHLQPKWKPKVSWFKNAESRLNHHLSGLFGVSSLAWTGHLVHVAIPESRGEHVRWDNFLTKLPHPEGLGPFFAGQWNIYAQNVDSSNHAFGTSQGAGTAILTFIGGFHPQTQSLWLTDIAHHHLAIAVVFIIAGHMYRTNFGIGHSIKEILETHTPPGGRLGRGHKGLYDTINNSLHFQLGLALASLGVITSLVAQHMYSLPPYAFLAQDFTTQAALYTHHQYIAGFIMTGAFAHGAIFFIRDYNPEQNKDNVLARMLEHKEAIISHLSWASLFLGFHTLGLYVHNDVMLAFGTPEKQILIEPIFAQWIQSAHGKALYGFDVLLSSTNNPAFNAGQSIWLPGWLDAINNNSNSLFLTIGPGDFLVHHAIALGLHTTTLILVKGALDARGSKLMPDKKEFGYSFPCDGPGRGGTCDISAWDAFYLAVFWMLNTIGWVTFYWHWKHITLWQGNAAQFNESSTYLMGWLRDYLWLNSSQLINGYNPFGMNSLSVWAWMFLFGHLVWATGFMFLISWRGYWQELIETLAWAHERTPLANLVRWKDKPVALSIVQARLVGLAHFSVGYIFTYAAFLIASTSGKFG.

The next 8 membrane-spanning stretches (helical) occupy residues 46–69 (IFASHFGQLAIIFLWTSGNLFHVA), 135–158 (LYNGALFLVILSSISLIAGWLHLQ), 175–199 (LNHHLSGLFGVSSLAWTGHLVHVAI), 273–291 (IAHHHLAIAVVFIIAGHMY), 330–353 (LHFQLGLALASLGVITSLVAQHMY), 369–395 (AALYTHHQYIAGFIMTGAFAHGAIFFI), 417–439 (AIISHLSWASLFLGFHTLGLYVH), and 517–535 (FLVHHAIALGLHTTTLILV). [4Fe-4S] cluster-binding residues include Cys-559 and Cys-568. A run of 2 helical transmembrane segments spans residues 575–596 (AFYLAVFWMLNTIGWVTFYWHW) and 643–665 (LSVWAWMFLFGHLVWATGFMFLI). His-654, Met-662, and Tyr-670 together coordinate chlorophyll a. Trp-671 is a binding site for phylloquinone. Residues 707–727 (LVGLAHFSVGYIFTYAAFLIA) form a helical membrane-spanning segment.

This sequence belongs to the PsaA/PsaB family. The PsaA/B heterodimer binds the P700 chlorophyll special pair and subsequent electron acceptors. PSI consists of a core antenna complex that captures photons, and an electron transfer chain that converts photonic excitation into a charge separation. The eukaryotic PSI reaction center is composed of at least 11 subunits. The cofactor is P700 is a chlorophyll a/chlorophyll a' dimer, A0 is one or more chlorophyll a, A1 is one or both phylloquinones and FX is a shared 4Fe-4S iron-sulfur center..

The protein resides in the plastid. It is found in the chloroplast thylakoid membrane. The catalysed reaction is reduced [plastocyanin] + hnu + oxidized [2Fe-2S]-[ferredoxin] = oxidized [plastocyanin] + reduced [2Fe-2S]-[ferredoxin]. Functionally, psaA and PsaB bind P700, the primary electron donor of photosystem I (PSI), as well as the electron acceptors A0, A1 and FX. PSI is a plastocyanin-ferredoxin oxidoreductase, converting photonic excitation into a charge separation, which transfers an electron from the donor P700 chlorophyll pair to the spectroscopically characterized acceptors A0, A1, FX, FA and FB in turn. Oxidized P700 is reduced on the lumenal side of the thylakoid membrane by plastocyanin. The protein is Photosystem I P700 chlorophyll a apoprotein A2 of Marchantia polymorpha (Common liverwort).